We begin with the raw amino-acid sequence, 559 residues long: Potassium-transporting ATPase potassium-binding subunit (559 aa).

A run of 13 helical transmembrane segments spans residues 5–25 (GFLLIASFLLILLVLAKPLGS), 27–47 (LARLIAAVPLPGVAGVERILW), 63–83 (LLALLTLNLLGLGILFCLLFW), 132–152 (GLTVQNFLSAATGIAVVFALI), 170–190 (LVRITLWILFPVALIIALFFI), 253–273 (LAQMLAIFLIPAALCFAFGEA), 283–303 (LLWAMSFIFVVCVAVVMWAEV), 327–347 (FGVLASSLFAVVTTAASCGAV), 356–376 (ALGGMVPMWLMQIGEVVFGGV), 379–399 (GLYGMLLFVLLAVFIAGLMIG), 416–436 (MTALAILVTPMLVLLGSALAM), 484–504 (LLAFCMFVGRFGVIIPVMAIA), and 524–544 (GALFIGLLIGTVLLVGALTFI).

This sequence belongs to the KdpA family. As to quaternary structure, the system is composed of three essential subunits: KdpA, KdpB and KdpC.

It localises to the cell inner membrane. Part of the high-affinity ATP-driven potassium transport (or Kdp) system, which catalyzes the hydrolysis of ATP coupled with the electrogenic transport of potassium into the cytoplasm. This subunit binds the periplasmic potassium ions and delivers the ions to the membrane domain of KdpB through an intramembrane tunnel. The chain is Potassium-transporting ATPase potassium-binding subunit from Salmonella typhi.